A 282-amino-acid chain; its full sequence is Undecaprenyl-diphosphatase 1 (282 aa).

8 helical membrane-spanning segments follow: residues 1 to 21 (MLLLQIVVLALIQGITEVLPL), 46 to 66 (GVALDVAVHLGTLGAVALYFW), 91 to 111 (AFLVVLGTLPAVATVLLLAHF), 117 to 137 (SPGLATIGWTTLGFGLLLGVI), 150 to 170 (MGGIDCLLIGLAQCLALLPGV), 193 to 213 (FSMLLSIPAIAGAATLVGLDL), 226 to 246 (LIAAVTAFLAAFLAVAAMMAW), and 260 to 280 (VLLGAALLALAYLGPDLAPFL).

Belongs to the UppP family.

The protein localises to the cell inner membrane. The enzyme catalyses di-trans,octa-cis-undecaprenyl diphosphate + H2O = di-trans,octa-cis-undecaprenyl phosphate + phosphate + H(+). Its function is as follows. Catalyzes the dephosphorylation of undecaprenyl diphosphate (UPP). Confers resistance to bacitracin. In Rhodospirillum rubrum (strain ATCC 11170 / ATH 1.1.1 / DSM 467 / LMG 4362 / NCIMB 8255 / S1), this protein is Undecaprenyl-diphosphatase 1.